The chain runs to 473 residues: Ribulose bisphosphate carboxylase large chain (473 aa).

Residues 1–2 (MS) constitute a propeptide that is removed on maturation. Pro3 carries the N-acetylproline modification. N6,N6,N6-trimethyllysine is present on Lys14. Residues Asn123 and Thr173 each contribute to the substrate site. Lys175 serves as the catalytic Proton acceptor. Residue Lys177 coordinates substrate. The Mg(2+) site is built by Lys201, Asp203, and Glu204. At Lys201 the chain carries N6-carboxylysine. His294 functions as the Proton acceptor in the catalytic mechanism. Substrate is bound by residues Arg295, His327, and Ser379.

It belongs to the RuBisCO large chain family. Type I subfamily. As to quaternary structure, heterohexadecamer of 8 large chains and 8 small chains; disulfide-linked. The disulfide link is formed within the large subunit homodimers. Mg(2+) serves as cofactor. In terms of processing, the disulfide bond which can form in the large chain dimeric partners within the hexadecamer appears to be associated with oxidative stress and protein turnover.

The protein resides in the plastid. It is found in the chloroplast. The catalysed reaction is 2 (2R)-3-phosphoglycerate + 2 H(+) = D-ribulose 1,5-bisphosphate + CO2 + H2O. The enzyme catalyses D-ribulose 1,5-bisphosphate + O2 = 2-phosphoglycolate + (2R)-3-phosphoglycerate + 2 H(+). Its function is as follows. RuBisCO catalyzes two reactions: the carboxylation of D-ribulose 1,5-bisphosphate, the primary event in carbon dioxide fixation, as well as the oxidative fragmentation of the pentose substrate in the photorespiration process. Both reactions occur simultaneously and in competition at the same active site. The protein is Ribulose bisphosphate carboxylase large chain of Monarda didyma (Scarlet bee-balm).